A 311-amino-acid chain; its full sequence is LOB domain-containing protein 10 (311 aa).

One can recognise an LOB domain in the interval 4-105; sequence TPCAACKLLR…QDLLTAKEEL (102 aa). A compositionally biased stretch (low complexity) spans 264-277; it reads LQEGQEQTEEGQFL. The segment at 264-311 is disordered; sequence LQEGQEQTEEGQFLMQPMGQENLHDEEEEEELEPPVKWRMSENKEASF. Residues 287–296 show a composition bias toward acidic residues; the sequence is HDEEEEEELE. A compositionally biased stretch (basic and acidic residues) spans 297 to 311; that stretch reads PPVKWRMSENKEASF.

It belongs to the LOB domain-containing protein family.

This is LOB domain-containing protein 10 (LBD10) from Arabidopsis thaliana (Mouse-ear cress).